We begin with the raw amino-acid sequence, 63 residues long: Small ribosomal subunit protein eS27 (63 aa).

Zn(2+) contacts are provided by Cys18, Cys21, Cys37, and Cys40. Residues 18 to 40 (CIDCGNEQIVFSHPATKVRCLIC) form a C4-type zinc finger.

The protein belongs to the eukaryotic ribosomal protein eS27 family. Part of the 30S ribosomal subunit. Zn(2+) is required as a cofactor.

This is Small ribosomal subunit protein eS27 from Pyrococcus furiosus (strain ATCC 43587 / DSM 3638 / JCM 8422 / Vc1).